Reading from the N-terminus, the 354-residue chain is Peptide chain release factor 1 (354 aa).

Gln230 is modified (N5-methylglutamine).

This sequence belongs to the prokaryotic/mitochondrial release factor family. Methylated by PrmC. Methylation increases the termination efficiency of RF1.

Its subcellular location is the cytoplasm. Its function is as follows. Peptide chain release factor 1 directs the termination of translation in response to the peptide chain termination codons UAG and UAA. The chain is Peptide chain release factor 1 from Pelobacter propionicus (strain DSM 2379 / NBRC 103807 / OttBd1).